The primary structure comprises 433 residues: MAKFDLTAKNCQYLDRHLTFPLLEFLLQKKVFDQTSLLKFILETVSKTNMVDYKHDIRERLAMDKVHPDELAQGRANVLATLKELQAEVAPLMKCMEELKNPDSTKDSKSVIHALQQTLDYDIILSAQKLAKYLYECGNYNDSLSYLYVCMLVMEPNDKNYLGVLWGKLAVEILTLNWQTALEDLTRLRDFIENYNFSPIQVLQQRAWLIHWSVLVFFNHGKGRDLIIDMFLYKPQYLNAIQTMCPHILRYLATAVIINRGRRNALKDLIKVIQQESYTYRDPITEFLEHLYVNFDFEGARKKLHECQTVIVNDFFIIGCLTEFVENARLMIFETFCRIHQCITIGMLADKLNMKPDEAECWIVNLIRNARLDAKIDSKLGHVVMGTQPLSPYQQLVEKIDSLSVRSEALTLLVERKHKAKTQEAGEGHWKYY.

The PCI domain occupies 217–390; that stretch reads FFNHGKGRDL…GHVVMGTQPL (174 aa).

It belongs to the eIF-3 subunit E family. Component of the eukaryotic translation initiation factor 3 (eIF-3) complex.

Its subcellular location is the cytoplasm. Component of the eukaryotic translation initiation factor 3 (eIF-3) complex, which is involved in protein synthesis of a specialized repertoire of mRNAs and, together with other initiation factors, stimulates binding of mRNA and methionyl-tRNAi to the 40S ribosome. The eIF-3 complex specifically targets and initiates translation of a subset of mRNAs involved in cell proliferation. This is Eukaryotic translation initiation factor 3 subunit E (eIF3-S6) from Anopheles gambiae (African malaria mosquito).